The sequence spans 193 residues: MAKNAKFRVPFRRRREGKTDFRQRLGLLLSGKPRLVARKSLNNVTAQLMSYDEKGDVVLVSAHTKELVKMGYKGHCGNLPAAYLTGLLLGKKAVKEGAEEAILDKGLHRATKGAAIFAVLKGALDAGMDIPHGDEIIAEEERLNGTHVKNYAESLKEDADAYKKQFSKYLEKGLNPEDLPEHVAELKEKILNL.

The protein belongs to the universal ribosomal protein uL18 family. As to quaternary structure, part of the 50S ribosomal subunit. Contacts the 5S and 23S rRNAs.

Functionally, this is one of the proteins that bind and probably mediate the attachment of the 5S RNA into the large ribosomal subunit, where it forms part of the central protuberance. In Methanococcus maripaludis (strain C5 / ATCC BAA-1333), this protein is Large ribosomal subunit protein uL18.